The chain runs to 749 residues: Transcription factor RFX3 (749 aa).

The segment at residues 183 to 258 is a DNA-binding region (RFX-type winged-helix); that stretch reads HLQWLLDNYE…YHYYGIRVKP (76 aa). The segment at 663–699 is disordered; that stretch reads VSPGNLDKDEGSEVESEMDEELDDSSEPQAKREKTEL. The span at 674–688 shows a compositional bias: acidic residues; sequence SEVESEMDEELDDSS.

The protein belongs to the RFX family. In terms of assembly, heterodimer; heterodimerizes with RFX1 and RFX2, and RFX6.

It localises to the nucleus. Functionally, transcription factor required for ciliogenesis and islet cell differentiation during endocrine pancreas development. Essential for the differentiation of nodal monocilia and left-right asymmetry specification during embryogenesis. Required for the biogenesis of motile cilia by governing growth and beating efficiency of motile cells. Also required for ciliated ependymal cell differentiation. Regulates the expression of genes involved in ciliary assembly (DYNC2LI1, FOXJ1 and BBS4) and genes involved in ciliary motility (DNAH11, DNAH9 and DNAH5). Together with RFX6, participates in the differentiation of 4 of the 5 islet cell types during endocrine pancreas development, with the exception of pancreatic PP (polypeptide-producing) cells. Regulates transcription by forming a heterodimer with another RFX protein and binding to the X-box in the promoter of target genes. Represses transcription of MAP1A in non-neuronal cells but not in neuronal cells. The protein is Transcription factor RFX3 (RFX3) of Homo sapiens (Human).